The primary structure comprises 339 residues: Uroporphyrinogen decarboxylase (339 aa).

Substrate-binding positions include 21–25, F40, D71, Y147, S202, and H315; that span reads RQAGR.

The protein belongs to the uroporphyrinogen decarboxylase family. As to quaternary structure, homodimer.

It is found in the cytoplasm. It carries out the reaction uroporphyrinogen III + 4 H(+) = coproporphyrinogen III + 4 CO2. It participates in porphyrin-containing compound metabolism; protoporphyrin-IX biosynthesis; coproporphyrinogen-III from 5-aminolevulinate: step 4/4. Catalyzes the decarboxylation of four acetate groups of uroporphyrinogen-III to yield coproporphyrinogen-III. The sequence is that of Uroporphyrinogen decarboxylase from Helicobacter pylori (strain ATCC 700392 / 26695) (Campylobacter pylori).